The following is a 106-amino-acid chain: Small ribosomal subunit protein bS16 (106 aa).

It belongs to the bacterial ribosomal protein bS16 family.

This is Small ribosomal subunit protein bS16 from Wolbachia sp. subsp. Brugia malayi (strain TRS).